A 418-amino-acid polypeptide reads, in one-letter code: MSLLVIGINHTSASVDLREKVAFSPEKLTKALDELKNSDAIQSGVILSTCNRTEIYCEVKHGISSGYVINWLAEFHHVALETLMPSIYIHEEQAAVKHLMRVSCGLDSLVLGEPQILGQVKKAFADAREHNAVEGTIEKLFQQDFSVAKRVRTETNIGGNAVSVAYAACTLARQIFESLSDSTVLLVGAGETIELVAKHLDDSGCKRLIVANRTRERAMGLAEQFNAEVISLPEIPEHLPKADIIISSTASPLPIIGKGMVESALKLRKHQPMLFVDIAVPRDIEGEVAELNDAYLYSVDDLQSIIDHNIEQRKIEAIQAEAIVSEESAEFMTWIRSRQAVNSIRQYRENSEAMRIELLQKSMQALASGQNPEKVLAELSNKLTNKLIHAPTLAMQQAAKNGETEKLTVIRTTIGLDN.

Residues 49 to 52, serine 108, 113 to 115, and glutamine 119 each bind substrate; these read TCNR and EPQ. Cysteine 50 serves as the catalytic Nucleophile. 188-193 lines the NADP(+) pocket; the sequence is GAGETI.

This sequence belongs to the glutamyl-tRNA reductase family. As to quaternary structure, homodimer.

The catalysed reaction is (S)-4-amino-5-oxopentanoate + tRNA(Glu) + NADP(+) = L-glutamyl-tRNA(Glu) + NADPH + H(+). It participates in porphyrin-containing compound metabolism; protoporphyrin-IX biosynthesis; 5-aminolevulinate from L-glutamyl-tRNA(Glu): step 1/2. Functionally, catalyzes the NADPH-dependent reduction of glutamyl-tRNA(Glu) to glutamate 1-semialdehyde (GSA). The chain is Glutamyl-tRNA reductase from Aliivibrio fischeri (strain ATCC 700601 / ES114) (Vibrio fischeri).